The primary structure comprises 659 residues: uncharacterized protein (659 aa).

Positions 1-25 are cleaved as a signal peptide; sequence MVKRRLSAFGNAFLIYFIIFRLCCC. The Lumenal portion of the chain corresponds to 26 to 556; the sequence is SPQTSHWCKY…LYQESSFQKR (531 aa). Residues Asn94, Asn111, Asn128, and Asn142 are each glycosylated (N-linked (GlcNAc...) asparagine). One can recognise an SUN domain in the interval 173 to 335; the sequence is AATIDSNIDE…SLLRVYGKTM (163 aa). 2 N-linked (GlcNAc...) asparagine glycosylation sites follow: Asn393 and Asn415. A disordered region spans residues 417–445; the sequence is TGKSESYPATSTRSFNDISPSSSSSYSTA. The segment covering 423–434 has biased composition (polar residues); sequence YPATSTRSFNDI. Residues Asn495 and Asn504 are each glycosylated (N-linked (GlcNAc...) asparagine). The helical transmembrane segment at 557 to 574 threads the bilayer; sequence LLMLQLTVLIVLTVYMAV. The Cytoplasmic segment spans residues 575–659; sequence SRLPENLPTT…IIHSRSHSVC (85 aa). Disordered stretches follow at residues 580–603 and 632–659; these read NLPT…SRDE and KRDP…HSVC. The span at 581–592 shows a compositional bias: polar residues; sequence LPTTRSSSNNPI. Basic and acidic residues predominate over residues 641 to 651; it reads SIHEREQDKII.

This sequence belongs to the SLP1 family. Interacts with EMP65.

The protein localises to the endoplasmic reticulum membrane. Functionally, may be involved in membrane protein folding. This is an uncharacterized protein from Schizosaccharomyces pombe (strain 972 / ATCC 24843) (Fission yeast).